Consider the following 419-residue polypeptide: eIF5-mimic protein 2 (419 aa).

M1 carries the N-acetylmethionine modification. The segment covering 1–15 (MNNQKQQKPTLSGQR) has biased composition (polar residues). A disordered region spans residues 1–26 (MNNQKQQKPTLSGQRFKTRKRDEKER). At S12 the chain carries Phosphoserine. Residues 247–414 (NQQTIGARKE…KNAEEESESE (168 aa)) enclose the W2 domain. A Glycyl lysine isopeptide (Lys-Gly) (interchain with G-Cter in SUMO2) cross-link involves residue K368. Phosphoserine occurs at positions 411 and 413.

Belongs to the BZW family.

Functionally, translation initiation regulator which represses repeat-associated non-AUG (RAN) initiated translation probably by acting as a competitive inhibitor of eukaryotic translation initiation factor 5 (EIF5) function. Enhances histone H4 gene transcription but does not seem to bind DNA directly. The chain is eIF5-mimic protein 2 (BZW1) from Pongo abelii (Sumatran orangutan).